We begin with the raw amino-acid sequence, 1095 residues long: DNA-directed RNA polymerase subunit beta (1095 aa).

The tract at residues 1069-1095 (DLMQDVNPRRSTPSRPTYESLGKEYEE) is disordered.

Belongs to the RNA polymerase beta chain family. In cyanobacteria the RNAP catalytic core is composed of 2 alpha, 1 beta, 1 beta', 1 gamma and 1 omega subunit. When a sigma factor is associated with the core the holoenzyme is formed, which can initiate transcription.

The enzyme catalyses RNA(n) + a ribonucleoside 5'-triphosphate = RNA(n+1) + diphosphate. Functionally, DNA-dependent RNA polymerase catalyzes the transcription of DNA into RNA using the four ribonucleoside triphosphates as substrates. This is DNA-directed RNA polymerase subunit beta from Prochlorococcus marinus (strain NATL2A).